A 320-amino-acid chain; its full sequence is uncharacterized protein (320 aa).

7 consecutive transmembrane segments (helical) span residues 107-127, 131-151, 169-189, 200-220, 228-248, 260-280, and 299-319; these read LSKENMLMLILSTIVAIAGIY, VALLIASMIIAPLLGPNIALS, LIAELIFVIILSMIAGHYLPI, ITLDFWSIIIALSAGIAGSLS, IAVGVMIAIALLPPLAVFGLL, ALILFLINMIAINLSAIVIFS, and TLYAILLWVTLFIAIFVLIIY.

The protein localises to the cell membrane. This is an uncharacterized protein from Methanocaldococcus jannaschii (strain ATCC 43067 / DSM 2661 / JAL-1 / JCM 10045 / NBRC 100440) (Methanococcus jannaschii).